We begin with the raw amino-acid sequence, 606 residues long: NADH-ubiquinone oxidoreductase chain 5 (606 aa).

The next 15 helical transmembrane spans lie at 3–23 (VINLIPTLMLTSLIILTLPII), 38–58 (ITKTAVTYAFAISLIPTLLFI), 87–107 (FFSLTFMPIALFITWSIMEFS), 124–144 (LLLFLITMLILVSANNLLQLF), 180–200 (IGDMGFIMMMAWFTIHLNSWE), 216–236 (LLGLLLASAGKSAQFGLHPWL), 244–264 (TPVSALLHSSTMVMAGVFTLI), 276–296 (IQTSTLCLGAITTLFTAICAL), 304–323 (IIALSTSSQLGLMMVTIGIN), 328–350 (AFIHMCTHAFFKAMLFLSSGSII), 369–389 (MPITSTAIIIGSLALTGMPFL), 404–424 (MSYINTWALLITLIAVSMTAS), 460–480 (LILGSIFMGFLISMNTIPHTT), 483–503 (MTMPPHLKFMALAVTLLGFTV), and 586–606 (LMKLYFLSFLLSITLGLLIAL).

It belongs to the complex I subunit 5 family. In terms of assembly, core subunit of respiratory chain NADH dehydrogenase (Complex I) which is composed of 45 different subunits.

It is found in the mitochondrion inner membrane. The enzyme catalyses a ubiquinone + NADH + 5 H(+)(in) = a ubiquinol + NAD(+) + 4 H(+)(out). Functionally, core subunit of the mitochondrial membrane respiratory chain NADH dehydrogenase (Complex I) which catalyzes electron transfer from NADH through the respiratory chain, using ubiquinone as an electron acceptor. Essential for the catalytic activity and assembly of complex I. This is NADH-ubiquinone oxidoreductase chain 5 (MT-ND5) from Loxodonta africana (African elephant).